Consider the following 100-residue polypeptide: Nucleoid-associated protein Cagg_3200 (100 aa).

It belongs to the YbaB/EbfC family. Homodimer.

The protein resides in the cytoplasm. It is found in the nucleoid. Its function is as follows. Binds to DNA and alters its conformation. May be involved in regulation of gene expression, nucleoid organization and DNA protection. The chain is Nucleoid-associated protein Cagg_3200 from Chloroflexus aggregans (strain MD-66 / DSM 9485).